A 416-amino-acid polypeptide reads, in one-letter code: Major royal jelly protein 8 (416 aa).

The first 16 residues, 1 to 16 (MIRWLLLMYLGITCQG), serve as a signal peptide directing secretion. 8 N-linked (GlcNAc...) asparagine glycosylation sites follow: asparagine 24, asparagine 58, asparagine 93, asparagine 115, asparagine 158, asparagine 175, asparagine 196, and asparagine 215.

The protein belongs to the major royal jelly protein family. In terms of tissue distribution, expressed at very low levels in the hypopharyngeal glands of worker honey bees (at protein level). Secreted into bee venom in the sting apparatus (at protein level). Expressed in the spermatheca of adult queen bees (at protein level); expression levels are higher in mated queens than in virgin queens. Along with Mrjp9 expressed at very low levels in the head of worker bees compared to other major royal jelly proteins.

Its subcellular location is the secreted. Component of bee sting venom. Component of royal jelly, a substance produced in the hypopharyngeal gland containing proteins, free amino acids, fatty acids, sugars and other nutrients, which is fed to developing larvae by worker nurse bees; may be present only at trace levels. All larvae are fed some royal jelly (also known as worker jelly) early in their development but it forms the principal source of nutrition for larvae destined to become queen bees. Produced in the spermatheca of adult queen bees, along with other major royal jelly proteins, where it may act as a nutrient supply for sperm stored by mated queens, or be involved in energy metabolism. The protein is Major royal jelly protein 8 of Apis mellifera (Honeybee).